A 400-amino-acid chain; its full sequence is GTPase Obg (400 aa).

The 159-residue stretch at Met-1–Leu-159 folds into the Obg domain. The region spanning Ala-160–Asp-333 is the OBG-type G domain. GTP-binding positions include Gly-166–Ser-173, Phe-191–Val-195, Asp-213–Gly-216, Asn-283–Asp-286, and Ser-314–Ile-316. The Mg(2+) site is built by Ser-173 and Thr-193.

It belongs to the TRAFAC class OBG-HflX-like GTPase superfamily. OBG GTPase family. Monomer. Requires Mg(2+) as cofactor.

It localises to the cytoplasm. In terms of biological role, an essential GTPase which binds GTP, GDP and possibly (p)ppGpp with moderate affinity, with high nucleotide exchange rates and a fairly low GTP hydrolysis rate. Plays a role in control of the cell cycle, stress response, ribosome biogenesis and in those bacteria that undergo differentiation, in morphogenesis control. The sequence is that of GTPase Obg from Aeromonas salmonicida (strain A449).